The following is a 23-amino-acid chain: Conotoxin as25a (23 aa).

Pro4 carries the post-translational modification 4-hydroxyproline; partial. Pro23 is subject to 4-hydroxyproline; partial; alternate. A Proline amide; alternate modification is found at Pro23.

The name as25b given in PubMed:23474143 corresponds to the hydroxylated peptide. The amidation of the C-terminus of this hydroxylated peptide is not directly confirmed. In terms of processing, contains 3 disulfide bonds. As to expression, expressed by the venom duct.

The protein resides in the secreted. Upon intracranial injection in mice, as25a (the toxin without the two 4-hydroxyprolines) provokes paralysis of the hind limbs and death with a dose of 240 pmol. This Conus cancellatus (Cancellate cone) protein is Conotoxin as25a.